Consider the following 178-residue polypeptide: CRISPR system ring nuclease SSO2081 (178 aa).

Residues 105–106 (RK) are transition state stabilizer.

This sequence belongs to the cOA ring nuclease family. In terms of assembly, homodimer. It depends on Does not require a metal cofactor. as a cofactor.

The protein localises to the cytoplasm. It carries out the reaction cyclic tetraadenylate = 2 5'-hydroxy-diadenylate 2',3'-cylic phosphate. CRISPR (clustered regularly interspaced short palindromic repeat) is an adaptive immune system that provides protection against mobile genetic elements (viruses, transposable elements and conjugative plasmids). CRISPR clusters contain spacers, sequences complementary to antecedent mobile elements, and target invading nucleic acids. CRISPR clusters are transcribed and processed into CRISPR RNA (crRNA). A nuclease that degrades cyclic oligoadenylates (cOA), second messengers that induce an antiviral state important for defense against invading nucleic acids. Destruction of cOA deactivates the Csx1 ribonuclease, preventing uncontrolled degradation of cellular RNA. Degrades cA4 (a tetraadenylate ring) into a linear diadenylate product with 5'-OH and 2',3'-cyclic phosphate termini. Is 10-fold more active than SSO1393, suggesting this is the major cA4 degradation enzyme. Is highly specific for cA4; it has very poor activity on cA6 and no discernible activity against a number of cyclic dinucleotides. There may be 2 active sites per homodimer. The protein is CRISPR system ring nuclease SSO2081 of Saccharolobus solfataricus (strain ATCC 35092 / DSM 1617 / JCM 11322 / P2) (Sulfolobus solfataricus).